The chain runs to 310 residues: Olfactory receptor 9A2 (310 aa).

The Extracellular segment spans residues 1–24; that stretch reads MMDNHSSATEFHLLGFPGSQGLHH. Asparagine 4 carries an N-linked (GlcNAc...) asparagine glycan. A helical transmembrane segment spans residues 25–45; that stretch reads ILFAIFFFFYLVTLMGNTVII. Topologically, residues 46-53 are cytoplasmic; it reads VIVCVDKR. Residues 54 to 74 traverse the membrane as a helical segment; the sequence is LQSPMYFFLSHLSTLEILVTT. Over 75–98 the chain is Extracellular; sequence IIVPMMLWGLLFLGCRQYLSLHVS. Over 117–135 the chain is Cytoplasmic; the sequence is DRYVAVCNPLRYNIIMNSS. The helical transmembrane segment at 136–156 threads the bilayer; it reads TCIWVVIVSWVFGFLSEIWPI. Over 157 to 193 the chain is Extracellular; it reads YATFQFTFRKSNSLDHFYCDRGQLLKLSCDNTLLTEF. Residues 194–213 form a helical membrane-spanning segment; that stretch reads ILFLMAVFILIGSLIPTIVS. At 214–233 the chain is on the cytoplasmic side; sequence YTYIISTILKIPSASGRRKA. A helical transmembrane segment spans residues 234-254; it reads FSTFASHFTCVVIGYGSCLFL. The Extracellular segment spans residues 255 to 267; the sequence is YVKPKQTQGVEYN. Residues 268–288 traverse the membrane as a helical segment; the sequence is KIVSLLVSVLTPFLNPFIFTL. Residues 289–310 lie on the Cytoplasmic side of the membrane; that stretch reads RNDKVKEALRDGMKRCCQLLKD.

This sequence belongs to the G-protein coupled receptor 1 family.

The protein resides in the cell membrane. Its function is as follows. Odorant receptor. The sequence is that of Olfactory receptor 9A2 (OR9A2) from Homo sapiens (Human).